A 183-amino-acid chain; its full sequence is Oligoribonuclease (183 aa).

The Exonuclease domain occupies 8-171 (LIWIDLEMTG…DDIRDSIHEL (164 aa)). Tyr-129 is a catalytic residue.

The protein belongs to the oligoribonuclease family.

The protein resides in the cytoplasm. Functionally, 3'-to-5' exoribonuclease specific for small oligoribonucleotides. The polypeptide is Oligoribonuclease (Halorhodospira halophila (strain DSM 244 / SL1) (Ectothiorhodospira halophila (strain DSM 244 / SL1))).